A 379-amino-acid chain; its full sequence is Guanine nucleotide-binding protein subunit alpha-12 (379 aa).

Cys11 carries S-palmitoyl cysteine lipidation. Residues 54 to 379 form the G-alpha domain; sequence RLVKILLLGA…QENLKDIMLQ (326 aa). A G1 motif region spans residues 57–70; it reads KILLLGAGESGKST. Residues 65–70 and 200–203 each bind GTP; these read ESGKST and LLAR. Ser69 contributes to the Mg(2+) binding site. Residues 198–206 form a G2 motif region; that stretch reads DILLARKAT. Residue Thr206 coordinates Mg(2+). Thr206 is subject to Phosphothreonine. The segment at 221-230 is G3 motif; the sequence is FKMVDVGGQR. The interval 290–297 is G4 motif; it reads ILFLNKMD. GTP is bound by residues 294 to 297 and Ala351; that span reads NKMD. The segment at 349 to 354 is G5 motif; it reads TTAIDT.

It belongs to the G-alpha family. G(12) subfamily. As to quaternary structure, g proteins are composed of 3 units; alpha, beta and gamma. The alpha chain contains the guanine nucleotide binding site. Interacts with UBXD5. Interacts (in GTP-bound form) with PPP5C (via TPR repeats); activates PPP5C phosphatase activity and translocates PPP5C to the cell membrane. Interacts with RGS22. Interacts (via N-terminus) with NAPA; the interaction promotes CDH5 localization to plasma membrane. Interacts with CTNND1 (via N-terminus); the interaction regulates CDH1-mediated cell-cell adhesion. Interacts with PPP2R1A; the interaction promotes protein phosphatase 2A activation causing dephosphorylation of MAPT. Interacts (in GTP-bound form) with ARHGEF1. Interacts (in GTP-bound form) with ARHGEF11 (via RGS domain). Interacts (in GTP-bound form) with ARHGEF12 (via RGS domain).

The protein resides in the cell membrane. Its subcellular location is the lateral cell membrane. The protein localises to the cytoplasm. Functionally, guanine nucleotide-binding proteins (G proteins) are involved as modulators or transducers in various transmembrane signaling systems. Activates effector molecule RhoA by binding and activating RhoGEFs (ARHGEF12/LARG). GNA12-dependent Rho signaling subsequently regulates transcription factor AP-1 (activating protein-1). GNA12-dependent Rho signaling also regulates protein phosphatese 2A activation causing dephosphorylation of its target proteins. Promotes tumor cell invasion and metastasis by activating RhoA/ROCK signaling pathway and up-regulating pro-inflammatory cytokine production. Inhibits CDH1-mediated cell adhesion in process independent from Rho activation. Together with NAPA promotes CDH5 localization to plasma membrane. May play a role in the control of cell migration through the TOR signaling cascade. The protein is Guanine nucleotide-binding protein subunit alpha-12 (Gna12) of Rattus norvegicus (Rat).